We begin with the raw amino-acid sequence, 257 residues long: Snake venom serine protease BITS01A (257 aa).

Residues 1–18 (MVLIRVIANLLILQVSYA) form the signal peptide. The propeptide occupies 19–24 (QKSSEL). Residues 25–248 (VVGGDECDIN…YLPWIQSIIA (224 aa)) enclose the Peptidase S1 domain. Intrachain disulfides connect Cys31–Cys162, Cys49–Cys65, Cys97–Cys255, Cys141–Cys209, Cys173–Cys188, and Cys199–Cys224. Residue His64 is the Charge relay system of the active site. N-linked (GlcNAc...) asparagine glycosylation occurs at Asn101. Asp109 serves as the catalytic Charge relay system. 3 N-linked (GlcNAc...) asparagine glycosylation sites follow: Asn121, Asn153, and Asn169. Ser203 acts as the Charge relay system in catalysis. N-linked (GlcNAc...) asparagine glycosylation is found at Asn210 and Asn250.

Belongs to the peptidase S1 family. Snake venom subfamily. Monomer. As to expression, expressed by the venom gland.

It localises to the secreted. Snake venom serine protease that may act in the hemostasis system of the prey. This Bothrops insularis (Golden lancehead) protein is Snake venom serine protease BITS01A.